Here is a 388-residue protein sequence, read N- to C-terminus: MNEIKKKQIAILGSTGSIGTQALQVIEEHPELYEVYALTANNKVDLLIAQARKFMPEAVVIANEEKYAQLKEALSDLPVKVYAGAAALCQIVESGPIDVVLTAMVGYAGLKPTMNAIRAGKAIALANKETLVVAGELINQLARQYRTPILPVDSEHSAVFQCLAGEVGNPIEKVILTASGGPFRTCTMEQLKTVTKVQALKHPNWEMGAKITIDSASMMNKGFEVIEAKWLFGVQPGQIEVVVHPQSVIHSMVQFEDGAIKAQLGMPDMRLPIQYAFSYPDRINSSFDRLDFSKCTNLTFEQPDTKRFRNLALAYESMYRGGNMPCIVNAANEVVVAAFLRDEISFLGMSDVIEHTMGQVSFVQTPTYDDYVATDAEARRIARELICK.

T15, G16, S17, I18, and N127 together coordinate NADPH. K128 lines the 1-deoxy-D-xylulose 5-phosphate pocket. E129 is an NADPH binding site. D153 contributes to the Mn(2+) binding site. Residues S154, E155, S179, and H202 each coordinate 1-deoxy-D-xylulose 5-phosphate. E155 is a Mn(2+) binding site. G208 provides a ligand contact to NADPH. Residues S215, N220, K221, and E224 each contribute to the 1-deoxy-D-xylulose 5-phosphate site. Mn(2+) is bound at residue E224.

It belongs to the DXR family. Requires Mg(2+) as cofactor. Mn(2+) serves as cofactor.

It catalyses the reaction 2-C-methyl-D-erythritol 4-phosphate + NADP(+) = 1-deoxy-D-xylulose 5-phosphate + NADPH + H(+). It functions in the pathway isoprenoid biosynthesis; isopentenyl diphosphate biosynthesis via DXP pathway; isopentenyl diphosphate from 1-deoxy-D-xylulose 5-phosphate: step 1/6. Its function is as follows. Catalyzes the NADPH-dependent rearrangement and reduction of 1-deoxy-D-xylulose-5-phosphate (DXP) to 2-C-methyl-D-erythritol 4-phosphate (MEP). This is 1-deoxy-D-xylulose 5-phosphate reductoisomerase from Bacteroides fragilis (strain YCH46).